A 1063-amino-acid chain; its full sequence is Lysine-specific demethylase phf2 (1063 aa).

Residues 5–56 (PVYCICRLPYDVTQFMIECDACKDWFHGSCVGVDEDEAPDIDIYHCPNCEKT) form a PHD-type zinc finger. The JmjC domain occupies 197–353 (FSDARMANIV…MQMRAYEVEK (157 aa)). T246 is a 2-oxoglutarate binding site. H249 and E251 together coordinate Fe cation. 2-oxoglutarate-binding residues include Y259 and K266. N321 is a Fe cation binding site. 4 disordered regions span residues 448–546 (VSDS…LAAL), 704–761 (NIKE…SAGI), 773–864 (GIDY…DMFD), and 879–1045 (YVYP…MATA). Residues 460–477 (SEPSNSKPPAEEPPSALS) are compositionally biased toward low complexity. Basic and acidic residues-rich tracts occupy residues 513–540 (PPKE…EKKP) and 723–745 (KSPD…DVKG). A compositionally biased stretch (basic residues) spans 746 to 755 (RNSKVSKKKG). Residues 776-791 (YSNNSQPPASPSTQEA) show a composition bias toward polar residues. Positions 813 to 833 (SNSQAKNNSHSSAASKKPSGA) are enriched in low complexity. Basic residues predominate over residues 842–852 (RPAKRLPKKTQ). The span at 920–929 (RQERPAREGA) shows a compositional bias: basic and acidic residues. The segment covering 953 to 964 (IKKKKKSAKKKP) has biased composition (basic residues). Over residues 965 to 975 (IVAEESHKLSH) the composition is skewed to basic and acidic residues. 2 stretches are compositionally biased toward low complexity: residues 976–988 (DSSS…DSES) and 1021–1031 (SSSSSSQNASS). S1021 is subject to Phosphoserine; by PKA.

Belongs to the JHDM1 histone demethylase family. JHDM1D subfamily.

The protein localises to the nucleus. It localises to the nucleolus. The protein resides in the chromosome. Its subcellular location is the centromere. It is found in the kinetochore. Lysine demethylase that demethylates both histones and non-histone proteins. Mediates demethylation of dimethylated 'Lys-9' of histone H3 (H3K9me2). Recruited to trimethylated 'Lys-4' of histone H3 (H3K4me3) at rDNA promoters and promotes expression of rDNA. The sequence is that of Lysine-specific demethylase phf2 (phf2) from Danio rerio (Zebrafish).